The following is a 471-amino-acid chain: Neuraminidase (471 aa).

The Intravirion segment spans residues 1 to 6; that stretch reads MNPNQK. A helical transmembrane segment spans residues 7–27; the sequence is LFALSGVAIALSVMNLLIGIS. The interval 11–33 is involved in apical transport and lipid raft association; the sequence is SGVAIALSVMNLLIGISNVGLNV. Residues 28 to 471 are Virion surface-facing; it reads NVGLNVSLHL…PDGAQIQYFS (444 aa). N-linked (GlcNAc...) asparagine; by host glycosylation is found at Asn32, Asn47, Asn56, Asn57, Asn67, Asn68, and Asn87. The hypervariable stalk region stretch occupies residues 36-87; that stretch reads HLKEKGTKQEENLTCTTITQNNTTVVENTYVNNTTIITKEPDLKAPSYLLLN. Residues 90 to 471 are head of neuraminidase; the sequence is LCSVEGWVVI…PDGAQIQYFS (382 aa). 8 disulfide bridges follow: Cys91–Cys419, Cys123–Cys128, Cys183–Cys230, Cys232–Cys237, Cys278–Cys291, Cys280–Cys289, Cys318–Cys336, and Cys423–Cys450. Arg117 serves as a coordination point for substrate. Asn145 carries an N-linked (GlcNAc...) asparagine; by host glycan. The active-site Proton donor/acceptor is Asp150. Arg151 serves as a coordination point for substrate. Asn200 and Asn234 each carry an N-linked (GlcNAc...) asparagine; by host glycan. 276–277 is a binding site for substrate; sequence EE. A substrate-binding site is contributed by Arg292. Ca(2+) contacts are provided by Asp293, Gly297, and Asp324. Residue Arg371 coordinates substrate. Asn401 carries N-linked (GlcNAc...) asparagine; by host glycosylation. The active-site Nucleophile is the Tyr405.

It belongs to the glycosyl hydrolase 34 family. As to quaternary structure, homotetramer. Ca(2+) serves as cofactor. N-glycosylated.

The protein localises to the virion membrane. The protein resides in the host apical cell membrane. It catalyses the reaction Hydrolysis of alpha-(2-&gt;3)-, alpha-(2-&gt;6)-, alpha-(2-&gt;8)- glycosidic linkages of terminal sialic acid residues in oligosaccharides, glycoproteins, glycolipids, colominic acid and synthetic substrates.. Inhibited by the neuraminidase inhibitors zanamivir (Relenza) and oseltamivir (Tamiflu). These drugs interfere with the release of progeny virus from infected cells and are effective against all influenza strains. Resistance to neuraminidase inhibitors is quite rare. In terms of biological role, catalyzes the removal of terminal sialic acid residues from viral and cellular glycoconjugates. Cleaves off the terminal sialic acids on the glycosylated HA during virus budding to facilitate virus release. Additionally helps virus spread through the circulation by further removing sialic acids from the cell surface. These cleavages prevent self-aggregation and ensure the efficient spread of the progeny virus from cell to cell. Otherwise, infection would be limited to one round of replication. Described as a receptor-destroying enzyme because it cleaves a terminal sialic acid from the cellular receptors. May facilitate viral invasion of the upper airways by cleaving the sialic acid moieties on the mucin of the airway epithelial cells. Likely to plays a role in the budding process through its association with lipid rafts during intracellular transport. May additionally display a raft-association independent effect on budding. Plays a role in the determination of host range restriction on replication and virulence. Sialidase activity in late endosome/lysosome traffic seems to enhance virus replication. This Influenza A virus (strain A/Duck/Germany/1949 H10N7) protein is Neuraminidase.